The sequence spans 127 residues: Thioredoxin domain-containing protein 8 (127 aa).

In terms of domain architecture, Thioredoxin spans 1–92; that stretch reads MVQIIKDTNE…SQKVTLFSRI (92 aa). An intrachain disulfide couples Cys32 to Cys35.

Belongs to the thioredoxin family. Testis-specific. Only expressed during spermiogenesis, prominently in the Golgi apparatus of pachytene spermatocytes and round and elongated spermatids, with a transient localization in the developing acrosome of round spermatids (at protein level).

The protein localises to the cytoplasm. It localises to the golgi apparatus. Functionally, may be required for post-translational modifications of proteins required for acrosomal biogenesis. May act by reducing disulfide bonds within the sperm. This is Thioredoxin domain-containing protein 8 (TXNDC8) from Homo sapiens (Human).